Consider the following 513-residue polypeptide: GMP synthase [glutamine-hydrolyzing] (513 aa).

The Glutamine amidotransferase type-1 domain occupies 3 to 200 (SVLVLDFGSQ…LIDIAGITPD (198 aa)). Cys-80 (nucleophile) is an active-site residue. Catalysis depends on residues His-174 and Glu-176. In terms of domain architecture, GMPS ATP-PPase spans 201 to 388 (WSPKHFIDHQ…LGIAEDILMR (188 aa)). Position 228–234 (228–234 (SGGVDSS)) interacts with ATP.

Homodimer.

The enzyme catalyses XMP + L-glutamine + ATP + H2O = GMP + L-glutamate + AMP + diphosphate + 2 H(+). It participates in purine metabolism; GMP biosynthesis; GMP from XMP (L-Gln route): step 1/1. Functionally, catalyzes the synthesis of GMP from XMP. The sequence is that of GMP synthase [glutamine-hydrolyzing] from Chlorobium limicola (strain DSM 245 / NBRC 103803 / 6330).